A 472-amino-acid chain; its full sequence is Nucleoporin NUP49/NSP49 (472 aa).

Residues 2–3 (FG) form an FG 1 repeat. A GLFG 1 repeat occupies 14–17 (GLFG). The tract at residues 28–104 (NTGFSFGGTQ…TANTGGGLFG (77 aa)) is disordered. Residues 33–34 (FG) form an FG 2 repeat. A GLFG 2 repeat occupies 48–51 (GLFG). Residues 64–80 (SFGQQQQQSQTNAFGGS) are compositionally biased toward low complexity. FG repeat units lie at residues 65-66 (FG) and 77-78 (FG). GLFG repeat units follow at residues 86-89 (GLFG) and 101-104 (GLFG). One copy of the SLFG 1 repeat lies at 113–116 (SLFG). GLFG repeat units lie at residues 125-128 (GLFG) and 148-151 (GLFG). An SLFG 2 repeat occupies 159–162 (SLFG). A GLFG 7; approximate repeat occupies 175 to 178 (GMFG). The stretch at 185-188 (SLFG) is one SLFG 3 repeat. A GLFG 8 repeat occupies 199–202 (GLFG). Residues 210 to 213 (SLFG) form an SLFG 4 repeat. The tract at residues 211–242 (LFGSSNNNNNNNNSNNIMSASGGLFGNQQQQL) is disordered. Positions 214-226 (SSNNNNNNNNSNN) are enriched in low complexity. Residues 233–236 (GLFG) form a GLFG 9 repeat.

The protein belongs to the nucleoporin GLFG family. As to quaternary structure, component of the nuclear pore complex (NPC). NPC constitutes the exclusive means of nucleocytoplasmic transport. NPCs allow the passive diffusion of ions and small molecules and the active, nuclear transport receptor-mediated bidirectional transport of macromolecules such as proteins, RNAs, ribonucleoparticles (RNPs), and ribosomal subunits across the nuclear envelope. Due to its 8-fold rotational symmetry, all subunits are present with 8 copies or multiples thereof. NUP49 is part of the NUP57 subcomplex (NIC96, NSP1, NUP49, NUP57) interacting with NUP57. Interacts through its FG repeats with karyopherins.

It localises to the nucleus. The protein resides in the nuclear pore complex. It is found in the nucleus membrane. Functionally, functions as a component of the nuclear pore complex (NPC). NPC components, collectively referred to as nucleoporins (NUPs), can play the role of both NPC structural components and of docking or interaction partners for transiently associated nuclear transport factors. Active directional transport is assured by both, a Phe-Gly (FG) repeat affinity gradient for these transport factors across the NPC and a transport cofactor concentration gradient across the nuclear envelope (GSP1 and GSP2 GTPases associated predominantly with GTP in the nucleus, with GDP in the cytoplasm). NUP49 plays an important role in several nuclear transport pathways including poly(A)+ RNA, tRNA, and pre-ribosome transport. The chain is Nucleoporin NUP49/NSP49 (NUP49) from Saccharomyces cerevisiae (strain ATCC 204508 / S288c) (Baker's yeast).